An 82-amino-acid polypeptide reads, in one-letter code: NKRINAMAEDGDPFAKLIVETDTFGSRVRVRGAETGLYICMNKKGKLIAKSNGKGKDCVFTEIELENNYTALQNAKYEGWYM.

The N-linked (GlcNAc...) asparagine glycan is linked to asparagine 68.

Belongs to the heparin-binding growth factors family. In terms of assembly, monomer. Homodimer. Interacts with FGFR1, FGFR2, FGFR3 and FGFR4. Affinity between fibroblast growth factors (FGFs) and their receptors is increased by heparan sulfate glycosaminoglycans that function as coreceptors.

It localises to the secreted. Functionally, plays an important role in the regulation of embryonic development, cell proliferation, cell differentiation and cell migration. Required for normal brain, eye, ear and limb development during embryogenesis. Required for normal development of the gonadotropin-releasing hormone (GnRH) neuronal system. Plays a role in neurite outgrowth in hippocampal cells. The chain is Fibroblast growth factor 8 (FGF8) from Canis lupus familiaris (Dog).